The primary structure comprises 962 residues: Rho GTPase-activating protein syd-1 (962 aa).

Disordered regions lie at residues 231-367, 397-419, and 437-471; these read GKKS…MRSD, PRTL…RIMT, and CGEE…NGSP. Composition is skewed to polar residues over residues 243 to 261, 323 to 345, 401 to 412, and 453 to 471; these read NATT…SSPR, SFNS…SSTA, RQPNDSNKSNSL, and PPFS…NGSP. Positions 572–696 constitute a C2 domain; the sequence is RAAGPGINVD…NDDRVFALNL (125 aa). A Rho-GAP domain is found at 729 to 923; that stretch reads VPLGRLVQRE…LDMNQASSSL (195 aa). A compositionally biased stretch (polar residues) spans 934-947; sequence VNSESGSDSPATSG. The disordered stretch occupies residues 934 to 962; the sequence is VNSESGSDSPATSGQKGGGGVSYVSESQC.

It localises to the synapse. Probable GTPase activator for the Rho-type GTPases by converting them to an inactive GDP-bound state. Regulates the localization and assembly of presynaptic components during presynaptic development and is required for specifying the identity of axons during initial polarity acquisition. In these roles it is thought to act cell autonomously downstream of syg-1 and syg-2 and upstream of syd-2, possibly as a positive regulator of the latter. Required for the control of movement, egg-laying and the correct localization of elks-1. This Caenorhabditis briggsae protein is Rho GTPase-activating protein syd-1.